A 203-amino-acid polypeptide reads, in one-letter code: dITP/XTP pyrophosphatase (203 aa).

A substrate-binding site is contributed by 8 to 13 (TANKGK). 2 residues coordinate Mg(2+): glutamate 41 and aspartate 70. The active-site Proton acceptor is the aspartate 70. Substrate contacts are provided by residues serine 71, 153 to 156 (FGYD), lysine 176, and 181 to 182 (HR).

This sequence belongs to the HAM1 NTPase family. As to quaternary structure, homodimer. It depends on Mg(2+) as a cofactor.

The enzyme catalyses XTP + H2O = XMP + diphosphate + H(+). The catalysed reaction is dITP + H2O = dIMP + diphosphate + H(+). It catalyses the reaction ITP + H2O = IMP + diphosphate + H(+). Pyrophosphatase that catalyzes the hydrolysis of nucleoside triphosphates to their monophosphate derivatives, with a high preference for the non-canonical purine nucleotides XTP (xanthosine triphosphate), dITP (deoxyinosine triphosphate) and ITP. Seems to function as a house-cleaning enzyme that removes non-canonical purine nucleotides from the nucleotide pool, thus preventing their incorporation into DNA/RNA and avoiding chromosomal lesions. The chain is dITP/XTP pyrophosphatase from Listeria monocytogenes serovar 1/2a (strain ATCC BAA-679 / EGD-e).